A 241-amino-acid polypeptide reads, in one-letter code: ATP synthase subunit a (241 aa).

5 helical membrane-spanning segments follow: residues 30 to 50, 91 to 111, 128 to 148, 193 to 213, and 214 to 234; these read GQVF…VVVG, FIGT…LVPW, INTT…AGLS, LVVA…VMFL, and GLFT…YYIG.

It belongs to the ATPase A chain family. In terms of assembly, F-type ATPases have 2 components, CF(1) - the catalytic core - and CF(0) - the membrane proton channel. CF(1) has five subunits: alpha(3), beta(3), gamma(1), delta(1), epsilon(1). CF(0) has four main subunits: a, b, b' and c.

It localises to the cellular thylakoid membrane. In terms of biological role, key component of the proton channel; it plays a direct role in the translocation of protons across the membrane. This is ATP synthase subunit a from Prochlorococcus marinus (strain MIT 9313).